A 256-amino-acid polypeptide reads, in one-letter code: Alcohol dehydrogenase (256 aa).

12 to 35 (FVAGLGGIGLDTSKELVKRDLKNL) serves as a coordination point for NAD(+). Serine 140 lines the substrate pocket. The active-site Proton acceptor is tyrosine 153.

It belongs to the short-chain dehydrogenases/reductases (SDR) family. In terms of assembly, homodimer.

The enzyme catalyses a primary alcohol + NAD(+) = an aldehyde + NADH + H(+). It catalyses the reaction a secondary alcohol + NAD(+) = a ketone + NADH + H(+). The chain is Alcohol dehydrogenase (Adh) from Drosophila mauritiana (Fruit fly).